We begin with the raw amino-acid sequence, 347 residues long: NADH-ubiquinone oxidoreductase chain 2 (347 aa).

The next 10 membrane-spanning stretches (helical) occupy residues 3–23 (PIIY…VMIS), 25–45 (HWLL…PVLM), 59–79 (YFLT…INLL), 89–109 (MFNP…LGLS), 149–169 (INPN…GWGG), 178–198 (IMAY…PYNT), 200–220 (MTIL…MLLI), 237–257 (MPVI…LPPL), 274–294 (ESII…YFYM), and 325–345 (LLPT…ALSS).

This sequence belongs to the complex I subunit 2 family. In terms of assembly, core subunit of respiratory chain NADH dehydrogenase (Complex I) which is composed of 45 different subunits. Interacts with TMEM242.

The protein resides in the mitochondrion inner membrane. It catalyses the reaction a ubiquinone + NADH + 5 H(+)(in) = a ubiquinol + NAD(+) + 4 H(+)(out). Functionally, core subunit of the mitochondrial membrane respiratory chain NADH dehydrogenase (Complex I) which catalyzes electron transfer from NADH through the respiratory chain, using ubiquinone as an electron acceptor. Essential for the catalytic activity and assembly of complex I. The sequence is that of NADH-ubiquinone oxidoreductase chain 2 from Sus scrofa (Pig).